Reading from the N-terminus, the 302-residue chain is GTP cyclohydrolase FolE2 (302 aa).

A disordered region spans residues 1–27; it reads MPKKQLPPKEERHKLFGSVPPKERTKP.

Belongs to the GTP cyclohydrolase IV family.

The catalysed reaction is GTP + H2O = 7,8-dihydroneopterin 3'-triphosphate + formate + H(+). It participates in cofactor biosynthesis; 7,8-dihydroneopterin triphosphate biosynthesis; 7,8-dihydroneopterin triphosphate from GTP: step 1/1. Functionally, converts GTP to 7,8-dihydroneopterin triphosphate. The sequence is that of GTP cyclohydrolase FolE2 from Oceanobacillus iheyensis (strain DSM 14371 / CIP 107618 / JCM 11309 / KCTC 3954 / HTE831).